The chain runs to 583 residues: Proline--tRNA ligase (583 aa).

Belongs to the class-II aminoacyl-tRNA synthetase family. ProS type 1 subfamily. As to quaternary structure, homodimer.

Its subcellular location is the cytoplasm. The enzyme catalyses tRNA(Pro) + L-proline + ATP = L-prolyl-tRNA(Pro) + AMP + diphosphate. In terms of biological role, catalyzes the attachment of proline to tRNA(Pro) in a two-step reaction: proline is first activated by ATP to form Pro-AMP and then transferred to the acceptor end of tRNA(Pro). As ProRS can inadvertently accommodate and process non-cognate amino acids such as alanine and cysteine, to avoid such errors it has two additional distinct editing activities against alanine. One activity is designated as 'pretransfer' editing and involves the tRNA(Pro)-independent hydrolysis of activated Ala-AMP. The other activity is designated 'posttransfer' editing and involves deacylation of mischarged Ala-tRNA(Pro). The misacylated Cys-tRNA(Pro) is not edited by ProRS. This chain is Proline--tRNA ligase, found in Aromatoleum aromaticum (strain DSM 19018 / LMG 30748 / EbN1) (Azoarcus sp. (strain EbN1)).